The following is a 201-amino-acid chain: MLAKKHGYRSRSAYKLIDIDCKFKLLQRGRYVLDLGSCPGGWAQVAAERVAEGGKAHVVAVDMAPMERIPNVDFVQCDVEHSPELLRAALQDRKFDVVLSDMAPKSCGHRQVDHANIINLCEMALDLAVEFLRSGGSFVTKILQGEYEQEFRRSLQYYFASVTYFKPKSSRSESSEIYLVGTKFKNPEHPYGNSEDAPSEC.

S-adenosyl-L-methionine contacts are provided by Gly40, Trp42, Asp62, Asp78, and Asp101. Lys141 acts as the Proton acceptor in catalysis.

The protein belongs to the class I-like SAM-binding methyltransferase superfamily. RNA methyltransferase RlmE family.

It is found in the cytoplasm. The catalysed reaction is uridine(2552) in 23S rRNA + S-adenosyl-L-methionine = 2'-O-methyluridine(2552) in 23S rRNA + S-adenosyl-L-homocysteine + H(+). In terms of biological role, specifically methylates the uridine in position 2552 of 23S rRNA at the 2'-O position of the ribose in the fully assembled 50S ribosomal subunit. The polypeptide is Ribosomal RNA large subunit methyltransferase E (Anaplasma marginale (strain Florida)).